We begin with the raw amino-acid sequence, 495 residues long: Loline biosynthesis cluster 1 transcription factor lolU1 (495 aa).

Its subcellular location is the nucleus. Transcriptional regulator that may regulate the expression of the loline biosynthesis cluster 1, one of the 2 clusters involved in the biosynthesis of loline alkaloids, potent insecticidal agents composed of a pyrrolizidine ring system and an uncommon ether bridge linking carbons 2 and 7. The protein is Loline biosynthesis cluster 1 transcription factor lolU1 of Epichloe uncinata (Endophyte fungus).